The following is a 209-amino-acid chain: Guanylate kinase (209 aa).

The region spanning 5-184 (GLLIVFSGPS…AAERVKRVIE (180 aa)) is the Guanylate kinase-like domain. 12–19 (GPSGVGKG) contacts ATP.

It belongs to the guanylate kinase family.

It is found in the cytoplasm. The enzyme catalyses GMP + ATP = GDP + ADP. In terms of biological role, essential for recycling GMP and indirectly, cGMP. The protein is Guanylate kinase of Streptococcus thermophilus (strain CNRZ 1066).